We begin with the raw amino-acid sequence, 158 residues long: Regulator of G-protein signaling 13 (158 aa).

The 117-residue stretch at 34–150 (SLESLMATKY…LKSEMYQQLL (117 aa)) folds into the RGS domain.

Its function is as follows. Inhibits signal transduction by increasing the GTPase activity of G protein alpha subunits thereby driving them into their inactive GDP-bound form. Binds to both G(i)-alpha and G(q)-alpha. The sequence is that of Regulator of G-protein signaling 13 (Rgs13) from Mus musculus (Mouse).